Reading from the N-terminus, the 175-residue chain is MEQQHIEVVGKLGSTYGIRGWLRIYSSTEQAESIFDYQPWFLKIKGEWQSIELENWRYHNHEIIVKLKGVDDREAAQILANVEIGVDLSVFPELEEGDYYWHDLIGCTVVNLEGYTMGTVTEMMETGSNDVLVVKANTKDAFGKQERLIPFLYEQVVKRVDLTTKTIEVDWDAGF.

Residues 96–175 (EGDYYWHDLI…TIEVDWDAGF (80 aa)) form the PRC barrel domain.

This sequence belongs to the RimM family. In terms of assembly, binds ribosomal protein uS19.

The protein localises to the cytoplasm. An accessory protein needed during the final step in the assembly of 30S ribosomal subunit, possibly for assembly of the head region. Essential for efficient processing of 16S rRNA. May be needed both before and after RbfA during the maturation of 16S rRNA. It has affinity for free ribosomal 30S subunits but not for 70S ribosomes. The protein is Ribosome maturation factor RimM of Haemophilus influenzae (strain PittEE).